A 364-amino-acid polypeptide reads, in one-letter code: RNA polymerase II holoenzyme cyclin-like subunit (364 aa).

Residues 53–143 (QQINRLSKRI…VGECEFSLIS (91 aa)) enclose the Cyclin N-terminal domain. The interval 268–303 (PGFGSQGSQQQAGFSQGNSQGSLQGDSAAAEPKKVT) is disordered. A compositionally biased stretch (low complexity) spans 273-289 (QGSQQQAGFSQGNSQGS).

It belongs to the cyclin family. Cyclin C subfamily. In terms of assembly, component of the SRB8-11 complex, a regulatory module of the Mediator complex.

Its subcellular location is the nucleus. Functionally, component of the SRB8-11 complex. The SRB8-11 complex is a regulatory module of the Mediator complex which is itself involved in regulation of basal and activated RNA polymerase II-dependent transcription. The SRB8-11 complex may be involved in the transcriptional repression of a subset of genes regulated by Mediator. It may inhibit the association of the Mediator complex with RNA polymerase II to form the holoenzyme complex. The SRB8-11 complex phosphorylates the C-terminal domain (CTD) of the largest subunit of RNA polymerase II. In Chaetomium globosum (strain ATCC 6205 / CBS 148.51 / DSM 1962 / NBRC 6347 / NRRL 1970) (Soil fungus), this protein is RNA polymerase II holoenzyme cyclin-like subunit (SSN8).